We begin with the raw amino-acid sequence, 753 residues long: Neuroendocrine convertase 1 (753 aa).

A signal peptide spans 1-27 (MGRRAWTLQCTAFSLFCAWCAMNSVKA). Positions 28–110 (KKQFVNEWAA…QQYEKERSKR (83 aa)) are excised as a propeptide. Residues 129–450 (QWYLQDTRMT…FGLLNAKALV (322 aa)) form the Peptidase S8 domain. Residue Asp-167 is the Charge relay system of the active site. A glycan (N-linked (GlcNAc...) asparagine) is linked at Asn-173. The active-site Charge relay system is the His-208. 2 cysteine pairs are disulfide-bonded: Cys-225–Cys-374 and Cys-317–Cys-347. Catalysis depends on Ser-382, which acts as the Charge relay system. An N-linked (GlcNAc...) asparagine glycan is attached at Asn-401. The 138-residue stretch at 460–597 (SVPEKKECVV…KLILHGTSSQ (138 aa)) folds into the P/Homo B domain. An intrachain disulfide couples Cys-467 to Cys-494. Disordered regions lie at residues 617-657 (RRGV…RRDE) and 676-695 (SKNS…KPNI).

It belongs to the peptidase S8 family. Furin subfamily. The cofactor is Ca(2+).

The protein resides in the cytoplasmic vesicle. It is found in the secretory vesicle. It carries out the reaction Release of protein hormones, neuropeptides and renin from their precursors, generally by hydrolysis of -Lys-Arg-|- bonds.. Involved in the processing of hormone and other protein precursors at sites comprised of pairs of basic amino acid residues. Substrates include POMC, renin, enkephalin, dynorphin, somatostatin, insulin and AGRP. The protein is Neuroendocrine convertase 1 (PCSK1) of Bos taurus (Bovine).